Reading from the N-terminus, the 460-residue chain is Argininosuccinate lyase (460 aa).

It belongs to the lyase 1 family. Argininosuccinate lyase subfamily.

It localises to the cytoplasm. It carries out the reaction 2-(N(omega)-L-arginino)succinate = fumarate + L-arginine. The protein operates within amino-acid biosynthesis; L-arginine biosynthesis; L-arginine from L-ornithine and carbamoyl phosphate: step 3/3. The chain is Argininosuccinate lyase from Campylobacter hominis (strain ATCC BAA-381 / DSM 21671 / CCUG 45161 / LMG 19568 / NCTC 13146 / CH001A).